A 138-amino-acid polypeptide reads, in one-letter code: Small ribosomal subunit protein uS11c (138 aa).

The tract at residues 1 to 22 (MAKSIPKTGSRKNVRIGSRNQT) is disordered.

This sequence belongs to the universal ribosomal protein uS11 family. In terms of assembly, part of the 30S ribosomal subunit.

It localises to the plastid. It is found in the chloroplast. The protein is Small ribosomal subunit protein uS11c of Phaseolus angularis (Azuki bean).